Consider the following 136-residue polypeptide: uncharacterized protein (136 aa).

The protein resides in the mitochondrion. This is an uncharacterized protein from Marchantia polymorpha (Common liverwort).